The following is a 202-amino-acid chain: Cytochrome c biogenesis ATP-binding export protein CcmA (202 aa).

Positions 3-200 constitute an ABC transporter domain; that stretch reads LAAENLSGER…EGTQELKMGA (198 aa). Residue 35-42 participates in ATP binding; sequence GPNGAGKS.

This sequence belongs to the ABC transporter superfamily. CcmA exporter (TC 3.A.1.107) family. As to quaternary structure, the complex is composed of two ATP-binding proteins (CcmA) and two transmembrane proteins (CcmB).

The protein resides in the cell inner membrane. It catalyses the reaction heme b(in) + ATP + H2O = heme b(out) + ADP + phosphate + H(+). In terms of biological role, part of the ABC transporter complex CcmAB involved in the biogenesis of c-type cytochromes; once thought to export heme, this seems not to be the case, but its exact role is uncertain. Responsible for energy coupling to the transport system. The polypeptide is Cytochrome c biogenesis ATP-binding export protein CcmA (Chelativorans sp. (strain BNC1)).